A 237-amino-acid polypeptide reads, in one-letter code: UDP-Gal:alpha-D-GlcNAc-diphosphoundecaprenol beta-1,4-galactosyltransferase (237 aa).

The active-site Nucleophile is Glu101.

The protein belongs to the glycosyltransferase 26 family. Requires Mn(2+) as cofactor. Ni(2+) is required as a cofactor. The cofactor is Pb(2+).

The catalysed reaction is N-acetyl-alpha-D-glucosaminyl-di-trans,octa-cis-undecaprenyl diphosphate + UDP-alpha-D-galactose = beta-D-Gal-(1-&gt;4)-alpha-D-GlcNAc-di-trans,octa-cis-undecaprenyl diphosphate + UDP + H(+). Its pathway is bacterial outer membrane biogenesis; LPS O-antigen biosynthesis. Functionally, galactosyltransferase that adds one galactose residue in the beta-1-4 linkage to GlcNAc-alpha-pyrophosphate-lipid in the biosynthesis of the O-polysaccharide repeating unit of the O antigen. The sequence is that of UDP-Gal:alpha-D-GlcNAc-diphosphoundecaprenol beta-1,4-galactosyltransferase (wfeD) from Shigella boydii.